Here is a 96-residue protein sequence, read N- to C-terminus: Basic blue protein (96 aa).

Residues 1–96 (AVYVVGGSGG…SGMKIAVNAL (96 aa)) enclose the Phytocyanin domain. 4 residues coordinate Cu cation: His39, Cys79, His84, and Met89. A disulfide bridge links Cys52 with Cys85.

In Cucumis sativus (Cucumber), this protein is Basic blue protein.